We begin with the raw amino-acid sequence, 225 residues long: Uracil-DNA glycosylase (225 aa).

The active-site Proton acceptor is the Asp-65.

This sequence belongs to the uracil-DNA glycosylase (UDG) superfamily. UNG family.

It localises to the cytoplasm. It carries out the reaction Hydrolyzes single-stranded DNA or mismatched double-stranded DNA and polynucleotides, releasing free uracil.. Excises uracil residues from the DNA which can arise as a result of misincorporation of dUMP residues by DNA polymerase or due to deamination of cytosine. This Clostridium beijerinckii (strain ATCC 51743 / NCIMB 8052) (Clostridium acetobutylicum) protein is Uracil-DNA glycosylase.